Here is a 165-residue protein sequence, read N- to C-terminus: Nucleotide-binding protein P9301_05061 (165 aa).

This sequence belongs to the YajQ family.

In terms of biological role, nucleotide-binding protein. This Prochlorococcus marinus (strain MIT 9301) protein is Nucleotide-binding protein P9301_05061.